Reading from the N-terminus, the 224-residue chain is Peroxiredoxin-6 (224 aa).

The Thioredoxin domain maps to 5 to 169 (LLLGDEAPNF…ILRVVISLQL (165 aa)). Residues 31–40 (DSWGILFSHP) are required and sufficient for targeting to lysosomes and lamellar bodies. Phosphothreonine is present on Thr44. Cys47 acts as the Cysteine sulfenic acid (-SOH) intermediate; for peroxidase activity in catalysis. An N6-acetyllysine modification is found at Lys63. A Phosphotyrosine modification is found at Tyr89. Asp140 (for phospholipase activity) is an active-site residue. A Phosphothreonine; by MAPK modification is found at Thr177. Lys209 is modified (N6-acetyllysine; alternate). Lys209 carries the post-translational modification N6-succinyllysine; alternate.

Belongs to the peroxiredoxin family. Prx6 subfamily. As to quaternary structure, homodimer. Interacts with GSTP1; mediates PRDX6 glutathionylation and regeneration. Interacts with APEX1. Interacts with STH. May interact with FAM168B. May interact with HTR2A. In terms of processing, irreversibly inactivated by overoxidation of Cys-47 to sulfinic acid (Cys-SO(2)H) and sulfonic acid (Cys-SO(3)H) forms upon oxidative stress. Phosphorylation at Thr-177 by MAP kinases increases the phospholipase activity of the enzyme. The phosphorylated form exhibits a greater lysophosphatidylcholine acyltransferase activity compared to the non-phosphorylated form.

It is found in the cytoplasm. The protein resides in the lysosome. The enzyme catalyses a hydroperoxide + 2 glutathione = an alcohol + glutathione disulfide + H2O. The catalysed reaction is a 1,2-diacyl-sn-glycero-3-phosphocholine + H2O = a 1-acyl-sn-glycero-3-phosphocholine + a fatty acid + H(+). It catalyses the reaction a 1-acyl-sn-glycero-3-phosphocholine + an acyl-CoA = a 1,2-diacyl-sn-glycero-3-phosphocholine + CoA. It carries out the reaction 1-hexadecanoyl-sn-glycero-3-phosphocholine + hexadecanoyl-CoA = 1,2-dihexadecanoyl-sn-glycero-3-phosphocholine + CoA. The enzyme catalyses 1,2-dihexadecanoyl-sn-glycero-3-phosphocholine + H2O = 1-hexadecanoyl-sn-glycero-3-phosphocholine + hexadecanoate + H(+). Thiol-specific peroxidase that catalyzes the reduction of hydrogen peroxide and organic hydroperoxides to water and alcohols, respectively. Can reduce H(2)O(2) and short chain organic, fatty acid, and phospholipid hydroperoxides. Also has phospholipase activity, and can therefore either reduce the oxidized sn-2 fatty acyl group of phospholipids (peroxidase activity) or hydrolyze the sn-2 ester bond of phospholipids (phospholipase activity). These activities are dependent on binding to phospholipids at acidic pH and to oxidized phospholipds at cytosolic pH. Plays a role in cell protection against oxidative stress by detoxifying peroxides and in phospholipid homeostasis. Exhibits acyl-CoA-dependent lysophospholipid acyltransferase which mediates the conversion of lysophosphatidylcholine (1-acyl-sn-glycero-3-phosphocholine or LPC) into phosphatidylcholine (1,2-diacyl-sn-glycero-3-phosphocholine or PC). Shows a clear preference for LPC as the lysophospholipid and for palmitoyl CoA as the fatty acyl substrate. This chain is Peroxiredoxin-6 (PRDX6), found in Macaca fascicularis (Crab-eating macaque).